The chain runs to 57 residues: uncharacterized protein (57 aa).

A helical membrane pass occupies residues 34–51 (TALLDAAAVVVVPGLLAA).

It is found in the membrane. This is an uncharacterized protein from Dictyostelium discoideum (Social amoeba).